The sequence spans 545 residues: Thermosome subunit beta (545 aa).

This sequence belongs to the TCP-1 chaperonin family. Forms a Heterooligomeric complex of two stacked eight-membered rings.

In terms of biological role, molecular chaperone; binds unfolded polypeptides in vitro, and has a weak ATPase activity. The polypeptide is Thermosome subunit beta (thsB) (Archaeoglobus fulgidus (strain ATCC 49558 / DSM 4304 / JCM 9628 / NBRC 100126 / VC-16)).